A 449-amino-acid polypeptide reads, in one-letter code: Argininosuccinate synthase (449 aa).

ATP contacts are provided by residues 17–25 (AFSGGLDTS) and Ala-43. Tyr-99 lines the L-citrulline pocket. ATP-binding residues include Gly-129 and Thr-131. L-aspartate contacts are provided by Thr-131, Asn-135, and Asp-136. Asn-135 contributes to the L-citrulline binding site. Residue Asp-136 coordinates ATP. L-citrulline-binding residues include Arg-139 and Ser-192. An ATP-binding site is contributed by Asp-194. 3 residues coordinate L-citrulline: Thr-201, Glu-203, and Glu-280.

It belongs to the argininosuccinate synthase family. Type 2 subfamily. Homotetramer.

The protein localises to the cytoplasm. It catalyses the reaction L-citrulline + L-aspartate + ATP = 2-(N(omega)-L-arginino)succinate + AMP + diphosphate + H(+). It participates in amino-acid biosynthesis; L-arginine biosynthesis; L-arginine from L-ornithine and carbamoyl phosphate: step 2/3. The chain is Argininosuccinate synthase from Dickeya dadantii (strain 3937) (Erwinia chrysanthemi (strain 3937)).